A 337-amino-acid polypeptide reads, in one-letter code: Ketol-acid reductoisomerase (NADP(+)) (337 aa).

One can recognise a KARI N-terminal Rossmann domain in the interval 3-183; the sequence is IELFYDADAD…GGGRAGIIPT (181 aa). Residues 26–29, R49, S52, S54, and 84–87 each bind NADP(+); these read YGSQ and DTSQ. H109 is a catalytic residue. NADP(+) is bound at residue G135. The 146-residue stretch at 184-329 folds into the KARI C-terminal knotted domain; sequence TFEAETVTDL…AKLRDLMSWV (146 aa). Mg(2+) contacts are provided by D192, E196, E228, and E232. S253 is a binding site for substrate.

It belongs to the ketol-acid reductoisomerase family. Requires Mg(2+) as cofactor.

It catalyses the reaction (2R)-2,3-dihydroxy-3-methylbutanoate + NADP(+) = (2S)-2-acetolactate + NADPH + H(+). The catalysed reaction is (2R,3R)-2,3-dihydroxy-3-methylpentanoate + NADP(+) = (S)-2-ethyl-2-hydroxy-3-oxobutanoate + NADPH + H(+). It participates in amino-acid biosynthesis; L-isoleucine biosynthesis; L-isoleucine from 2-oxobutanoate: step 2/4. It functions in the pathway amino-acid biosynthesis; L-valine biosynthesis; L-valine from pyruvate: step 2/4. In terms of biological role, involved in the biosynthesis of branched-chain amino acids (BCAA). Catalyzes an alkyl-migration followed by a ketol-acid reduction of (S)-2-acetolactate (S2AL) to yield (R)-2,3-dihydroxy-isovalerate. In the isomerase reaction, S2AL is rearranged via a Mg-dependent methyl migration to produce 3-hydroxy-3-methyl-2-ketobutyrate (HMKB). In the reductase reaction, this 2-ketoacid undergoes a metal-dependent reduction by NADPH to yield (R)-2,3-dihydroxy-isovalerate. This Corynebacterium efficiens (strain DSM 44549 / YS-314 / AJ 12310 / JCM 11189 / NBRC 100395) protein is Ketol-acid reductoisomerase (NADP(+)).